Consider the following 488-residue polypeptide: Cysteine--tRNA ligase (488 aa).

Zn(2+) is bound at residue Cys-29. A 'HIGH' region motif is present at residues 31–41; sequence ATVQGMPHVGH. Cys-227, His-252, and Glu-256 together coordinate Zn(2+). The short motif at 283 to 287 is the 'KMSKS' region element; sequence KMSKS. An ATP-binding site is contributed by Lys-286.

The protein belongs to the class-I aminoacyl-tRNA synthetase family. As to quaternary structure, monomer. Zn(2+) is required as a cofactor.

The protein localises to the cytoplasm. The catalysed reaction is tRNA(Cys) + L-cysteine + ATP = L-cysteinyl-tRNA(Cys) + AMP + diphosphate. This is Cysteine--tRNA ligase from Pseudarthrobacter chlorophenolicus (strain ATCC 700700 / DSM 12829 / CIP 107037 / JCM 12360 / KCTC 9906 / NCIMB 13794 / A6) (Arthrobacter chlorophenolicus).